The sequence spans 99 residues: Nucleoid-associated protein SPy_1862/M5005_Spy1580 (99 aa).

Belongs to the YbaB/EbfC family. As to quaternary structure, homodimer.

The protein localises to the cytoplasm. It localises to the nucleoid. Functionally, binds to DNA and alters its conformation. May be involved in regulation of gene expression, nucleoid organization and DNA protection. The sequence is that of Nucleoid-associated protein SPy_1862/M5005_Spy1580 from Streptococcus pyogenes serotype M1.